Reading from the N-terminus, the 1482-residue chain is Cystic fibrosis transmembrane conductance regulator (1482 aa).

Residues 1–77 (MQRSPLEKAN…KLINALRRCF (77 aa)) lie on the Cytoplasmic side of the membrane. The chain crosses the membrane as a helical span at residues 78 to 98 (FWRFVFHGIILYLGEVTKAVQ). The 285-residue stretch at 81-365 (FVFHGIILYL…WAVQTWYDSL (285 aa)) folds into the ABC transmembrane type-1 1 domain. At 99–122 (PLLLGRIIASYDPDNKVERSIAIY) the chain is on the extracellular side. A helical transmembrane segment spans residues 123-146 (LGIGLCLLFIVRTLLLHPAIFGLH). The Cytoplasmic segment spans residues 147-195 (HMGMQMRIALFSLIYKKTLKLSSRVLDKISTGQLISLLSNNLNKFDEGL). A helical membrane pass occupies residues 196–216 (ALAHFVWIVPLQVVLLMGLLW). Over 217–222 (DLLQAS) the chain is Extracellular. The chain crosses the membrane as a helical span at residues 223-243 (AFCGLAFLIVLALFQAWLGQM). The Cytoplasmic portion of the chain corresponds to 244–298 (MMKYRERRAGKINERLVITSEMIDNIQSVKAYCWEEAMEKMIENLRETELKLTRK). Residues 299-319 (TAYVRYFNSSAFFFSGFFVVF) form a helical membrane-spanning segment. The Extracellular portion of the chain corresponds to 320 to 339 (LAVLPYALIKGIILRKIFTT). The helical transmembrane segment at 340-358 (ISFCIVLRMAVTRQFPWAV) threads the bilayer. Over 359–859 (QTWYDSLGAI…YLRYITIHKN (501 aa)) the chain is Cytoplasmic. ATP is bound by residues tryptophan 401, serine 434, 458 to 465 (GSTGAGKT), and glutamine 493. An ABC transporter 1 domain is found at 423–646 (NGDNGLFFSN…RPDFSSKLMG (224 aa)). Cysteine 524 carries S-palmitoyl cysteine lipidation. Serine 549 and serine 660 each carry phosphoserine. The disordered R region stretch occupies residues 654-832 (SAERRSSILT…DEINEEDLKE (179 aa)). Serine 670 carries the post-translational modification Phosphoserine; by PKA. Phosphoserine is present on serine 686. Lysine 688 is covalently cross-linked (Glycyl lysine isopeptide (Lys-Gly) (interchain with G-Cter in ubiquitin)). A phosphoserine mark is found at serine 700, serine 712, serine 737, serine 769, serine 796, and serine 814. Residues 860-880 (LVFVLIWCLVIFLVEVAASLV) form a helical membrane-spanning segment. The region spanning 860–1156 (LVFVLIWCLV…AVNSSIDVDS (297 aa)) is the ABC transmembrane type-1 2 domain. Residues 881-919 (GLWLLEDISFKDKTNGTNGANNTFPVIITDTSKYYLFYI) are Extracellular-facing. 2 N-linked (GlcNAc...) asparagine glycosylation sites follow: asparagine 895 and asparagine 901. Residues 920–940 (YVGIADTFFALGIFRGLPLVH) traverse the membrane as a discontinuously helical segment. The Cytoplasmic segment spans residues 941–991 (TLISVSKILHHKMLYSVLKAPMSTFNTLKPGGILNRFSKDIAILDDLLPLT). The helical transmembrane segment at 992-1012 (IFDFIQLILIVVGALIVVSAI) threads the bilayer. The Extracellular portion of the chain corresponds to 1013-1014 (RP). Residues 1015 to 1035 (YIFLATVPVIIAFIMLRAYFL) form a helical membrane-spanning segment. Residues 1036-1096 (QTSQQLKQLE…TASWFLYLST (61 aa)) are Cytoplasmic-facing. The chain crosses the membrane as a helical span at residues 1097 to 1117 (LRWFQMRIELVFVIFFIAVTF). The Extracellular portion of the chain corresponds to 1118 to 1131 (ISILTTGDGEGRVG). Residues 1132-1152 (ILLTLAMNIMSTLQWAVNSSI) form a helical membrane-spanning segment. The Cytoplasmic portion of the chain corresponds to 1153 to 1482 (DVDSLMRSVS…TEEEVQETRL (330 aa)). Positions 1212 to 1445 (MIVKDLTAKY…KSLYRQAISH (234 aa)) constitute an ABC transporter 2 domain. ATP is bound by residues tyrosine 1221 and 1246 to 1253 (GRTGSGKS). The interval 1388 to 1482 (RVLKNAFANC…TEEEVQETRL (95 aa)) is interaction with GORASP2. Cysteine 1397 carries S-palmitoyl cysteine lipidation. Phosphoserine is present on residues serine 1446 and serine 1458. The PDZ-binding motif lies at 1480 to 1482 (TRL).

It belongs to the ABC transporter superfamily. ABCC family. CFTR transporter (TC 3.A.1.202) subfamily. As to quaternary structure, monomer; does not require oligomerization for channel activity. May form oligomers in the membrane. Interacts with SLC26A3, SLC26A6 and NHERF1. Interacts with SHANK2. Interacts with MYO6. Interacts (via C-terminus) with GOPC (via PDZ domain); this promotes CFTR internalization and thereby decreases channel activity. Interacts with SLC4A7 through NHERF1. Found in a complex with MYO5B and RAB11A. Interacts with ANO1. Interacts with SLC26A8. Interacts with AHCYL1; the interaction increases CFTR activity. Interacts with CSE1L. The core-glycosylated form interacts with GORASP2 (via PDZ GRASP-type 1 domain) in respone to ER stress. Interacts with MARCHF2; the interaction leads to CFTR ubiqtuitination and degradation. Interacts with ADGRG2. In terms of processing, N-glycosylated. Phosphorylated; cAMP treatment promotes phosphorylation and activates the channel. Dephosphorylation decreases the ATPase activity (in vitro). Phosphorylation at PKA sites activates the channel. Phosphorylation at PKC sites enhances the response to phosphorylation by PKA. Phosphorylated by AMPK; this inhibits channel activity. Post-translationally, ubiquitinated, leading to its degradation in the lysosome. Deubiquitination by USP10 in early endosomes enhances its endocytic recycling to the cell membrane. Ubiquitinated by RNF185 during ER stress. Ubiquitinated by MARCHF2.

The protein localises to the apical cell membrane. The protein resides in the early endosome membrane. It localises to the cell membrane. It is found in the recycling endosome membrane. Its subcellular location is the endoplasmic reticulum membrane. The protein localises to the nucleus. It catalyses the reaction ATP + H2O + closed Cl(-) channel = ADP + phosphate + open Cl(-) channel.. The enzyme catalyses chloride(in) = chloride(out). The catalysed reaction is hydrogencarbonate(in) = hydrogencarbonate(out). It carries out the reaction ATP + H2O = ADP + phosphate + H(+). In terms of biological role, epithelial ion channel that plays an important role in the regulation of epithelial ion and water transport and fluid homeostasis. Mediates the transport of chloride ions across the cell membrane. Possesses an intrinsic ATPase activity and utilizes ATP to gate its channel; the passive flow of anions through the channel is gated by cycles of ATP binding and hydrolysis by the ATP-binding domains. The ion channel is also permeable to HCO(3)(-); selectivity depends on the extracellular chloride concentration. Exerts its function also by modulating the activity of other ion channels and transporters. Contributes to the regulation of the pH and the ion content of the epithelial fluid layer. Modulates the activity of the epithelial sodium channel (ENaC) complex, in part by regulating the cell surface expression of the ENaC complex. May regulate bicarbonate secretion and salvage in epithelial cells by regulating the transporter SLC4A7. Can inhibit the chloride channel activity of ANO1. Plays a role in the chloride and bicarbonate homeostasis during sperm epididymal maturation and capacitation. The sequence is that of Cystic fibrosis transmembrane conductance regulator from Didelphis virginiana (North American opossum).